The chain runs to 289 residues: Early E1A protein (289 aa).

Positions 41–49 (PTLHELYDL) are interaction with RB1 in competition with E2F1. Positions 76–140 (EGIDLLTFPP…PSDDEDEEGE (65 aa)) are interaction with UBE2I. Positions 82–107 (TFPPAPGSPEPPHLSRQPEQPEQRAL) are disordered. Over residues 84-93 (PPAPGSPEPP) the composition is skewed to pro residues. Serine 89 is modified (phosphoserine; by host). A PXLXP motif, interaction with host ZMYND11 motif is present at residues 113–117 (PNLVP). Residues 122–126 (LTCHE) carry the LXCXE motif, interaction with host RB1 and TMEM173/STING motif. Residues 154–174 (CRSCHYHRRNTGDPDIMCSLC) fold into a zinc finger. The disordered stretch occupies residues 186-240 (PVSEPEPEPEPEPEPARPTRRPKMAPAILRRPTSPVSRECNSSTDSCDSGPSNTP). Phosphoserine; by host is present on residues serine 219 and serine 231. Residues 219 to 237 (SPVSRECNSSTDSCDSGPS) show a composition bias toward polar residues. Residues 258-289 (RVGGRRQAVECIEDLLNEPGQPLDLSCKRPRP) carry the Bipartite nuclear localization signal motif. The PXDLS motif, CTBP-binding signature appears at 279-283 (PLDLS).

Belongs to the adenoviridae E1A protein family. In terms of assembly, interacts with host UBE2I; this interaction interferes with polySUMOylation. Interacts with host RB1; this interaction induces the aberrant dissociation of RB1-E2F1 complex thereby disrupting the activity of RB1 and activating E2F1-regulated genes. Interacts with host ATF7; the interaction enhances ATF7-mediated viral transactivation activity which requires the zinc binding domains of both proteins. Isoform early E1A 32 kDa protein and isoform early E1A 26 kDa protein interact (via N-terminus) with CUL1 and E3 ubiquitin ligase RBX1; these interactions inhibit RBX1-CUL1-dependent elongation reaction of ubiquitin chains and attenuate ubiquitination of SCF(FBXW7) target proteins. Interacts (via PXLXP motif) with host ZMYND11/BS69 (via MYND-type zinc finger); this interaction inhibits E1A mediated transactivation. Interacts with host EP300; this interaction stimulates the acetylation of RB1 by recruiting EP300 and RB1 into a multimeric-protein complex. Interacts with host CTBP1 and CTBP2; this interaction seems to potentiate viral replication. Interacts with host DCAF7 (ref.16). Interacts with host DYRK1A. Interacts with host KPNA4; this interaction allows E1A import into the host nucleus. Interacts with host EP400; this interaction stabilizes MYC. Interacts with host TBP protein; this interaction probably disrupts the TBP-TATA complex. Interacts (via LXCXE motif) with host TMEM173/STING; this interaction impairs the ability of TMEM173/STING to sense cytosolic DNA and promote the production of type I interferon (IFN-alpha and IFN-beta). Interacts (via C-terminus) with host ZBED1/hDREF (via C-terminus); the interaction is direct.

The protein localises to the host nucleus. Its function is as follows. Plays a role in viral genome replication by driving entry of quiescent cells into the cell cycle. Stimulation of progression from G1 to S phase allows the virus to efficiently use the cellular DNA replicating machinery to achieve viral genome replication. E1A protein has both transforming and trans-activating activities. Induces the disassembly of the E2F1 transcription factor from RB1 by direct competition for the same binding site on RB1, with subsequent transcriptional activation of E2F1-regulated S-phase genes and of the E2 region of the adenoviral genome. Release of E2F1 leads to the ARF-mediated inhibition of MDM2 and causes TP53/p53 to accumulate because it is not targeted for degradation by MDM2-mediated ubiquitination anymore. This increase in TP53, in turn, would arrest the cell proliferation and direct its death but this effect is counteracted by the viral protein E1B-55K. Inactivation of the ability of RB1 to arrest the cell cycle is critical for cellular transformation, uncontrolled cellular growth and proliferation induced by viral infection. Interaction with RBX1 and CUL1 inhibits ubiquitination of the proteins targeted by SCF(FBXW7) ubiquitin ligase complex, and may be linked to unregulated host cell proliferation. The tumorigenesis-restraining activity of E1A may be related to the disruption of the host CtBP-CtIP complex through the CtBP binding motif. Interaction with host TMEM173/STING impairs the ability of TMEM173/STING to sense cytosolic DNA and promote the production of type I interferon (IFN-alpha and IFN-beta). Promotes the sumoylation of host ZBED1/hDREF with SUMO1. In Homo sapiens (Human), this protein is Early E1A protein.